A 234-amino-acid polypeptide reads, in one-letter code: Protein XNDC1N (234 aa).

The protein is Protein XNDC1N of Homo sapiens (Human).